The primary structure comprises 192 residues: Leucine-rich repeat-containing protein 51 (192 aa).

LRR repeat units follow at residues 50–71 (MTQSLWLNNNVLTDLRDFNHAV), 80–101 (NLAWIDLSFNDLTSIDPVLTTF), and 103–124 (NLSVLYLHGNSIQRLGEVNKLA). An LRRCT domain is found at 137–175 (NPIEEEKGYRQYVLCTLPHITTFDFSGVTKADRTTAEVW).

It is found in the cytoplasm. In Bos taurus (Bovine), this protein is Leucine-rich repeat-containing protein 51.